We begin with the raw amino-acid sequence, 470 residues long: Chromosomal replication initiator protein DnaA (470 aa).

Residues 1–89 form a domain I, interacts with DnaA modulators region; that stretch reads MIESNHVVLW…YNVMVDKTSI (89 aa). The domain II stretch occupies residues 89-130; the sequence is IPNQTVNLEASNRSTAVTPKSIVGGNKAPSFLKAPAVQDLDP. The tract at residues 131 to 348 is domain III, AAA+ region; it reads HLNPNYNFEN…GIVIAIMARS (218 aa). 4 residues coordinate ATP: glycine 176, glycine 178, lysine 179, and threonine 180. The tract at residues 349–470 is domain IV, binds dsDNA; the sequence is TIFNKEIDLD…EIESLLKKKA (122 aa).

The protein belongs to the DnaA family. As to quaternary structure, oligomerizes as a right-handed, spiral filament on DNA at oriC.

It localises to the cytoplasm. Its function is as follows. Plays an essential role in the initiation and regulation of chromosomal replication. ATP-DnaA binds to the origin of replication (oriC) to initiate formation of the DNA replication initiation complex once per cell cycle. Binds the DnaA box (a 9 base pair repeat at the origin) and separates the double-stranded (ds)DNA. Forms a right-handed helical filament on oriC DNA; dsDNA binds to the exterior of the filament while single-stranded (ss)DNA is stabiized in the filament's interior. The ATP-DnaA-oriC complex binds and stabilizes one strand of the AT-rich DNA unwinding element (DUE), permitting loading of DNA polymerase. After initiation quickly degrades to an ADP-DnaA complex that is not apt for DNA replication. Binds acidic phospholipids. The chain is Chromosomal replication initiator protein DnaA from Bacteroides thetaiotaomicron (strain ATCC 29148 / DSM 2079 / JCM 5827 / CCUG 10774 / NCTC 10582 / VPI-5482 / E50).